The sequence spans 370 residues: Gibberellin 3-beta-dioxygenase 2-2 (370 aa).

Residues 205 to 306 (MTATMHLNWY…RISLGYFLGP (102 aa)) enclose the Fe2OG dioxygenase domain. Fe cation-binding residues include His-229, Asp-231, and His-287. The active site involves Arg-297.

The protein belongs to the iron/ascorbate-dependent oxidoreductase family. GA3OX subfamily. L-ascorbate is required as a cofactor. The cofactor is Fe cation.

The catalysed reaction is gibberellin A20 + 2-oxoglutarate + O2 = gibberellin A1 + succinate + CO2. Converts the inactive gibberellin precursors GA9 and GA20 in the bioactives gibberellins GA4 and GA1. The sequence is that of Gibberellin 3-beta-dioxygenase 2-2 (GA3ox2-2) from Triticum aestivum (Wheat).